A 148-amino-acid chain; its full sequence is 18 kDa antigen (148 aa).

Positions Thr-21–Gly-131 constitute a sHSP domain.

Belongs to the small heat shock protein (HSP20) family.

Its function is as follows. Not known. This protein is one of the major immune reactive proteins in mycobacteria. The sequence is that of 18 kDa antigen (hsp18) from Mycobacterium leprae (strain TN).